The primary structure comprises 317 residues: Ubiquinone biosynthesis protein COQ9-A, mitochondrial (317 aa).

The N-terminal 46 residues, 1–46 (MAASVTRVLKGAGGRQLLLMVARRRPVLMQPFLLMPRKFWVSSALR), are a transit peptide targeting the mitochondrion. The segment at 50–97 (QRQPPFSASSTHAETQGHAEEQYQQKQPPPRYTDQAGEESEGYESEEQ) is disordered. Positions 53 to 63 (PPFSASSTHAE) are enriched in polar residues. Over residues 85 to 96 (AGEESEGYESEE) the composition is skewed to acidic residues. Arginine 243 serves as a coordination point for a 1,2-diacylglycero-3-phosphoethanolamine.

It belongs to the COQ9 family. As to quaternary structure, homodimer. Heterodimer; two heterodimers of COQ7:COQ9 come together on the same side of the lipid pseudo-bilayer and form a curved tetramer with a hydrophobic surface suitable for membrane interaction. These two tetramers assemble into a soluble octamer with a pseudo-bilayer of lipids captured within. Interacts with COQ7; this interaction allows ubiquinone (CoQ) isoprene intermediates presentation to COQ7 and facilitates the COQ7-mediated hydroxylase step.

The protein localises to the mitochondrion. Its pathway is cofactor biosynthesis; ubiquinone biosynthesis. Its function is as follows. Membrane-associated protein that warps the membrane surface to access and bind aromatic isoprenes with high specificity, including ubiquinone (CoQ) isoprene intermediates and presents them directly to COQ7, therefore facilitating the COQ7-mediated hydroxylase step. Participates in the biosynthesis of coenzyme Q, also named ubiquinone, an essential lipid-soluble electron transporter for aerobic cellular respiration. The chain is Ubiquinone biosynthesis protein COQ9-A, mitochondrial (coq9-a) from Xenopus laevis (African clawed frog).